The following is a 303-amino-acid chain: Coenzyme PQQ synthesis protein B (303 aa).

This sequence belongs to the PqqB family.

It participates in cofactor biosynthesis; pyrroloquinoline quinone biosynthesis. Functionally, may be involved in the transport of PQQ or its precursor to the periplasm. This chain is Coenzyme PQQ synthesis protein B, found in Acinetobacter baumannii (strain AB0057).